A 61-amino-acid chain; its full sequence is MARYRHSRSRSRSXYRRRXRRRSRYRSRRRRYRGRRRRRSRRGRRRGYSRRRYSRRRRRRY.

A disordered region spans residues 1–61; it reads MARYRHSRSR…RYSRRRRRRY (61 aa).

Belongs to the protamine P1 family. Testis.

Its subcellular location is the nucleus. It is found in the chromosome. In terms of biological role, protamines substitute for histones in the chromatin of sperm during the haploid phase of spermatogenesis. They compact sperm DNA into a highly condensed, stable and inactive complex. The chain is Sperm protamine P1 (PRM1) from Onychogalea fraenata (Bridled nail-tailed wallaby).